Consider the following 249-residue polypeptide: 2,3-bisphosphoglycerate-dependent phosphoglycerate mutase 2 (249 aa).

Substrate is bound by residues 8 to 15 (RHGESIWN), 21 to 22 (TG), arginine 60, 87 to 90 (ERHY), lysine 98, 114 to 115 (RR), and 183 to 184 (GN). Histidine 9 functions as the Tele-phosphohistidine intermediate in the catalytic mechanism. Glutamate 87 serves as the catalytic Proton donor/acceptor.

This sequence belongs to the phosphoglycerate mutase family. BPG-dependent PGAM subfamily. Homodimer.

The catalysed reaction is (2R)-2-phosphoglycerate = (2R)-3-phosphoglycerate. It functions in the pathway carbohydrate degradation; glycolysis; pyruvate from D-glyceraldehyde 3-phosphate: step 3/5. Its function is as follows. Catalyzes the interconversion of 2-phosphoglycerate and 3-phosphoglycerate. This is 2,3-bisphosphoglycerate-dependent phosphoglycerate mutase 2 from Nitrosomonas europaea (strain ATCC 19718 / CIP 103999 / KCTC 2705 / NBRC 14298).